The sequence spans 852 residues: Polyphosphate kinase (852 aa).

2 disordered regions span residues 1–36 (MATGVSSRDGSRERIRRRAVARDHPGCGPHRLDRPI) and 58–82 (SHDPAPSQSVGKRPQKSTKTASRRK). The segment covering 20-36 (VARDHPGCGPHRLDRPI) has biased composition (basic and acidic residues). Residues 58–67 (SHDPAPSQSV) show a composition bias toward polar residues. An ATP-binding site is contributed by Asn-131. Residues 251-303 (GDEIGPQRTPPPSDSLDNRVPSNLKRNSDTANQQPTPAENISAPEDGAEQTEP) form a disordered region. The interval 258–303 (RTPPPSDSLDNRVPSNLKRNSDTANQQPTPAENISAPEDGAEQTEP) is insert. Positions 270-289 (VPSNLKRNSDTANQQPTPAE) are enriched in polar residues. Positions 524 and 554 each coordinate Mg(2+). The active-site Phosphohistidine intermediate is the His-584. ATP contacts are provided by Tyr-617, Arg-713, and His-741.

It belongs to the polyphosphate kinase 1 (PPK1) family. Requires Mg(2+) as cofactor. In terms of processing, an intermediate of this reaction is the autophosphorylated ppk in which a phosphate is covalently linked to a histidine residue through a N-P bond.

It catalyses the reaction [phosphate](n) + ATP = [phosphate](n+1) + ADP. Its function is as follows. Catalyzes the reversible transfer of the terminal phosphate of ATP to form a long-chain polyphosphate (polyP). This Rhodopirellula baltica (strain DSM 10527 / NCIMB 13988 / SH1) protein is Polyphosphate kinase.